The chain runs to 551 residues: Hydroxylamine reductase (551 aa).

Residues C3, C6, C18, and C25 each contribute to the [2Fe-2S] cluster site. Hybrid [4Fe-2O-2S] cluster contacts are provided by H249, E273, C317, C405, C433, C459, E493, and K495. Cysteine persulfide is present on C405.

Belongs to the HCP family. [2Fe-2S] cluster serves as cofactor. It depends on hybrid [4Fe-2O-2S] cluster as a cofactor.

Its subcellular location is the cytoplasm. The catalysed reaction is A + NH4(+) + H2O = hydroxylamine + AH2 + H(+). Its function is as follows. Catalyzes the reduction of hydroxylamine to form NH(3) and H(2)O. The sequence is that of Hydroxylamine reductase from Actinobacillus pleuropneumoniae serotype 7 (strain AP76).